Reading from the N-terminus, the 763-residue chain is MAP7 domain-containing protein 2 (763 aa).

A compositionally biased stretch (gly residues) spans 1–11 (MERSGGNGAGA). Disordered stretches follow at residues 1-72 (MERS…REKC), 102-127 (LEEQ…LREE), and 140-531 (ERTQ…KAMI). The segment covering 12–31 (RAGAPSEGAAKGSSLLSAKS) has biased composition (low complexity). A compositionally biased stretch (basic and acidic residues) spans 53–72 (LKSDERQRLAKERREEREKC). Polar residues-rich tracts occupy residues 184–212 (PSDT…NLPK) and 241–251 (LKSSYKSSPTR). Residues 312 to 321 (KRSSSPVKSK) show a composition bias toward low complexity. 3 stretches are compositionally biased toward basic and acidic residues: residues 354–372 (ETLK…KEGA), 381–420 (PREE…EHSA), and 437–531 (LAEK…KAMI). A coiled-coil region spans residues 434-575 (AKILAEKRRQ…QERLERKKRI (142 aa)).

This sequence belongs to the MAP7 family. Interacts (via N-terminus) with microtubules; facilitates microtubule stabilization. Interacts with kinesin-1 family members, KIF5A, KIF5B and KIF5C. Detected only in the brain and testis (at the protein level).

It is found in the cytoplasm. The protein localises to the cytoskeleton. Its subcellular location is the microtubule organizing center. It localises to the centrosome. The protein resides in the cell projection. It is found in the axon. Its function is as follows. Microtubule-stabilizing protein involved in the control of cell motility and neurite outgrowth. Acts as a critical cofactor for kinesin transport; in the proximal axon regulates kinesin-1 family members, KIF5A, KIF5B and KIF5C recruitment to microtubules and contributes to kinesin-1-mediated transport in the axons. This chain is MAP7 domain-containing protein 2 (Map7d2), found in Rattus norvegicus (Rat).